Reading from the N-terminus, the 208-residue chain is Large ribosomal subunit protein uL3 (208 aa).

An N5-methylglutamine modification is found at glutamine 149.

It belongs to the universal ribosomal protein uL3 family. Part of the 50S ribosomal subunit. Forms a cluster with proteins L14 and L19. Methylated by PrmB.

In terms of biological role, one of the primary rRNA binding proteins, it binds directly near the 3'-end of the 23S rRNA, where it nucleates assembly of the 50S subunit. In Haemophilus influenzae (strain 86-028NP), this protein is Large ribosomal subunit protein uL3.